A 660-amino-acid polypeptide reads, in one-letter code: Ankyrin repeat domain-containing protein OPG023 (660 aa).

9 ANK repeats span residues 31 to 64 (FKNN…PLHK), 101 to 131 (NDFN…DLSV), 135 to 166 (NHRS…SVLY), 190 to 222 (YIIA…KPSS), 226 to 257 (NYCT…NTAY), 268 to 302 (RGIM…PYGI), 325 to 359 (NSDV…VVNK), 449 to 478 (RGET…DVNI), and 482 to 512 (NGYT…TLDC). Residues 578-658 (NTMFSLIFTE…PYTIKYKIFE (81 aa)) form a PRANC/F-box-like region.

It belongs to the orthopoxvirus OPG023 family. As to quaternary structure, interacts (via N-terminus) with host RELA. Interacts (via PRANC/F-box-like domain) with the SKP1 component of the host SCF ubiquitin ligase complex.

Its function is as follows. Substrate-specific adapter of SKP1-containing E3 ubiquitin-protein ligases which mediate the ubiquitination and subsequent proteasomal degradation of host target proteins. Prevents activation and subsequent nuclear localization of NF-kappa-B in infected cells, by targeting NF-kappa-B RELA subunit to the SCF E3 ligase complex. This is Ankyrin repeat domain-containing protein OPG023 (OPG023) from Cynomys gunnisoni (Gunnison's prairie dog).